The primary structure comprises 240 residues: Putative S-adenosylmethionine-dependent methyltransferase RcsF (240 aa).

A TsaA-like domain is found at 5 to 142 (ISPIGHVRSC…YVPYADIVPD (138 aa)). S-adenosyl-L-methionine-binding positions include 22-24 (PRQ), 63-64 (HQ), Arg91, and 122-125 (LDGT).

Belongs to the tRNA methyltransferase O family.

In Pseudomonas aeruginosa, this protein is Putative S-adenosylmethionine-dependent methyltransferase RcsF (rcsF).